Consider the following 225-residue polypeptide: MKKFFIIGTDTEVGKTYISTKLIEVCEHQNIKSLCLKPVASGQSQFSELCEDVESILNAYKHKFTAAEINLISFNQAVAPHIIAAKTKVDISIENLKQFIEDKYNQDLDILFIEGAGGLLTPYSDHTTQLDLIKALQIPVLLVSAIKVGCINHTLLTINELNRHNIKLAGWIANCNDSNIKYIDEQINTIEELSGYKCSAKISRNADYLDFIDLSKILISPEENE.

12-17 contacts ATP; sequence EVGKTY. Residue Thr-16 coordinates Mg(2+). Residue Lys-37 is part of the active site. Residue Ser-41 coordinates substrate. ATP is bound by residues Asp-52, 114 to 117, and 174 to 175; these read EGAG and NC. Mg(2+) contacts are provided by Asp-52 and Glu-114.

Belongs to the dethiobiotin synthetase family. Homodimer. The cofactor is Mg(2+).

It localises to the cytoplasm. It catalyses the reaction (7R,8S)-7,8-diammoniononanoate + CO2 + ATP = (4R,5S)-dethiobiotin + ADP + phosphate + 3 H(+). It functions in the pathway cofactor biosynthesis; biotin biosynthesis; biotin from 7,8-diaminononanoate: step 1/2. In terms of biological role, catalyzes a mechanistically unusual reaction, the ATP-dependent insertion of CO2 between the N7 and N8 nitrogen atoms of 7,8-diaminopelargonic acid (DAPA, also called 7,8-diammoniononanoate) to form a ureido ring. The sequence is that of ATP-dependent dethiobiotin synthetase BioD from Francisella tularensis subsp. mediasiatica (strain FSC147).